We begin with the raw amino-acid sequence, 42 residues long: Iota-conotoxin-like R11.16 (42 aa).

Cystine bridges form between C5-C19, C12-C22, C18-C27, and C21-C36.

The protein belongs to the conotoxin I1 superfamily. As to expression, expressed by the venom duct.

Its subcellular location is the secreted. Its function is as follows. Iota-conotoxins bind to voltage-gated sodium channels (Nav) and act as agonists by shifting the voltage-dependence of activation to more hyperpolarized levels. Produces general excitatory symptoms. This chain is Iota-conotoxin-like R11.16, found in Conus radiatus (Rayed cone).